We begin with the raw amino-acid sequence, 428 residues long: Enolase (428 aa).

(2R)-2-phosphoglycerate is bound at residue glutamine 163. The active-site Proton donor is the glutamate 205. Mg(2+) is bound by residues aspartate 242, glutamate 284, and aspartate 311. 4 residues coordinate (2R)-2-phosphoglycerate: lysine 336, arginine 365, serine 366, and lysine 387. Lysine 336 serves as the catalytic Proton acceptor.

This sequence belongs to the enolase family. It depends on Mg(2+) as a cofactor.

It localises to the cytoplasm. The protein resides in the secreted. It is found in the cell surface. The enzyme catalyses (2R)-2-phosphoglycerate = phosphoenolpyruvate + H2O. It participates in carbohydrate degradation; glycolysis; pyruvate from D-glyceraldehyde 3-phosphate: step 4/5. In terms of biological role, catalyzes the reversible conversion of 2-phosphoglycerate (2-PG) into phosphoenolpyruvate (PEP). It is essential for the degradation of carbohydrates via glycolysis. The sequence is that of Enolase from Tropheryma whipplei (strain TW08/27) (Whipple's bacillus).